Here is a 394-residue protein sequence, read N- to C-terminus: MNKKTLYDYDFAGKTVFCRVDFNVPMKDGKITDETRIQAALPTIKYLSEQGARVLLASHLGRPKGEVVESLRLAPVATRLSELLGKEVQAVQEAHGPVAKQAVEGLEDGGVLLLENVRFYPGEEKNDPELAKAFASLADIFVNDAFGAAHRAHASTEGIAHYLPSAAGFLMEKELDVLGKALSNPERPFTAVIGGAKVKDKIGVIDNLLDKVDNLIIGGGLAYTFVKAQGYEVGKSLLEEDKLDLAKQFMEKAEQKGVKFYMPEDVIVADDFSDDANKKEVAISGIPADWEALDIGPKTRKTYEAVLKASKLVIWNGPMGVFELESFAGGTKAVANALAEASDTYSVIGGGDSAAAVEQFGLADKMSHISTGGGASLEFMEGKELPGVVALSEK.

Substrate is bound by residues 21 to 23, arginine 36, 59 to 62, arginine 118, and arginine 151; these read DFN and HLGR. Phosphoserine is present on serine 183. Lysine 201 contacts ATP. The residue at position 299 (threonine 299) is a Phosphothreonine. ATP-binding positions include glutamate 323 and 350–353; that span reads GGDS.

This sequence belongs to the phosphoglycerate kinase family. Monomer.

It localises to the cytoplasm. The catalysed reaction is (2R)-3-phosphoglycerate + ATP = (2R)-3-phospho-glyceroyl phosphate + ADP. Its pathway is carbohydrate degradation; glycolysis; pyruvate from D-glyceraldehyde 3-phosphate: step 2/5. This Shouchella clausii (strain KSM-K16) (Alkalihalobacillus clausii) protein is Phosphoglycerate kinase.